The chain runs to 607 residues: Glutamine--fructose-6-phosphate aminotransferase [isomerizing] (607 aa).

The active-site Nucleophile; for GATase activity is the Cys2. Positions 2 to 217 (CGIIGIIGND…DGDWAVLTRN (216 aa)) constitute a Glutamine amidotransferase type-2 domain. 2 consecutive SIS domains span residues 283 to 422 (IGID…ARGA) and 455 to 597 (VCHD…VDQP). The For Fru-6P isomerization activity role is filled by Lys602.

Homodimer.

It localises to the cytoplasm. The enzyme catalyses D-fructose 6-phosphate + L-glutamine = D-glucosamine 6-phosphate + L-glutamate. In terms of biological role, catalyzes the first step in hexosamine metabolism, converting fructose-6P into glucosamine-6P using glutamine as a nitrogen source. This chain is Glutamine--fructose-6-phosphate aminotransferase [isomerizing], found in Brucella melitensis biotype 1 (strain ATCC 23456 / CCUG 17765 / NCTC 10094 / 16M).